Here is a 406-residue protein sequence, read N- to C-terminus: Tryptophan 2,3-dioxygenase (406 aa).

Substrate-binding positions include 72-76 (FIVTH) and Arg144. Position 328 (His328) interacts with heme. Thr342 provides a ligand contact to substrate.

Belongs to the tryptophan 2,3-dioxygenase family. As to quaternary structure, homotetramer. Dimer of dimers. Requires heme as cofactor.

It catalyses the reaction L-tryptophan + O2 = N-formyl-L-kynurenine. It functions in the pathway amino-acid degradation; L-tryptophan degradation via kynurenine pathway; L-kynurenine from L-tryptophan: step 1/2. In terms of biological role, heme-dependent dioxygenase that catalyzes the oxidative cleavage of the L-tryptophan (L-Trp) pyrrole ring and converts L-tryptophan to N-formyl-L-kynurenine. Catalyzes the oxidative cleavage of the indole moiety. The sequence is that of Tryptophan 2,3-dioxygenase from Xenopus tropicalis (Western clawed frog).